Consider the following 487-residue polypeptide: Proline--tRNA ligase (487 aa).

The protein belongs to the class-II aminoacyl-tRNA synthetase family. ProS type 3 subfamily. In terms of assembly, homodimer.

The protein resides in the cytoplasm. The enzyme catalyses tRNA(Pro) + L-proline + ATP = L-prolyl-tRNA(Pro) + AMP + diphosphate. In terms of biological role, catalyzes the attachment of proline to tRNA(Pro) in a two-step reaction: proline is first activated by ATP to form Pro-AMP and then transferred to the acceptor end of tRNA(Pro). The protein is Proline--tRNA ligase of Pyrobaculum neutrophilum (strain DSM 2338 / JCM 9278 / NBRC 100436 / V24Sta) (Thermoproteus neutrophilus).